The chain runs to 177 residues: Adenine phosphoribosyltransferase (177 aa).

The protein belongs to the purine/pyrimidine phosphoribosyltransferase family. Homodimer.

Its subcellular location is the cytoplasm. It carries out the reaction AMP + diphosphate = 5-phospho-alpha-D-ribose 1-diphosphate + adenine. It participates in purine metabolism; AMP biosynthesis via salvage pathway; AMP from adenine: step 1/1. Catalyzes a salvage reaction resulting in the formation of AMP, that is energically less costly than de novo synthesis. In Leuconostoc citreum (strain KM20), this protein is Adenine phosphoribosyltransferase.